A 447-amino-acid polypeptide reads, in one-letter code: Cytochrome P450 monooxygenase aunB (447 aa).

C386 contacts heme.

It belongs to the cytochrome P450 family. Heme serves as cofactor.

It carries out the reaction 2 fonsecin B + NADPH + O2 + H(+) = aurasperone B + NADP(+) + 2 H2O. The catalysed reaction is 2 rubrofusarin B + NADPH + O2 + H(+) = aurasperone A + NADP(+) + 2 H2O. It participates in secondary metabolite biosynthesis. Cytochrome P450 monooxygenase; part of the gene cluster that mediates the biosynthesis of aurasperone B, a dimeric gamma-naphthopyrone. The first step in the biosynthesis of aurasperone B is the production of gamma-naphthopyrone precursor YWA1 by the non-reducing polyketide synthase albA, via condensation of one acetyl-CoA starter unit with 6 malonyl-CoA units. YWA1 is then methylated by aunE at position C-6 to yield foncesin which is further methylated at position C-8 by aunD to produce fonsecin B. A key enzyme in the biosynthetic pathway is the cytochrome P450 monooxygenase aunB which catalyzes the oxidative dimerization of fonsecin B to aurasperone B. AunB also catalyzes the oxidative dimerization of rubrofusarin B into aurasperone A. The sequence is that of Cytochrome P450 monooxygenase aunB from Aspergillus niger (strain ATCC MYA-4892 / CBS 513.88 / FGSC A1513).